The following is a 122-amino-acid chain: Large ribosomal subunit protein uL14 (122 aa).

This sequence belongs to the universal ribosomal protein uL14 family. In terms of assembly, part of the 50S ribosomal subunit. Forms a cluster with proteins L3 and L19. In the 70S ribosome, L14 and L19 interact and together make contacts with the 16S rRNA in bridges B5 and B8.

Binds to 23S rRNA. Forms part of two intersubunit bridges in the 70S ribosome. This Xylella fastidiosa (strain 9a5c) protein is Large ribosomal subunit protein uL14.